An 87-amino-acid chain; its full sequence is Phosphocarrier protein HPr (87 aa).

Positions A2 to A87 constitute an HPr domain. H15 (pros-phosphohistidine intermediate) is an active-site residue. Position 46 is a phosphoserine; by HPrK/P (S46).

It belongs to the HPr family.

The protein localises to the cytoplasm. Phosphorylation on Ser-46 inhibits the phosphoryl transfer from enzyme I to HPr. Its function is as follows. General (non sugar-specific) component of the phosphoenolpyruvate-dependent sugar phosphotransferase system (sugar PTS). This major carbohydrate active-transport system catalyzes the phosphorylation of incoming sugar substrates concomitantly with their translocation across the cell membrane. The phosphoryl group from phosphoenolpyruvate (PEP) is transferred to the phosphoryl carrier protein HPr by enzyme I. Phospho-HPr then transfers it to the PTS EIIA domain. P-Ser-HPr interacts with the catabolite control protein A (CcpA), forming a complex that binds to DNA at the catabolite response elements cre, operator sites preceding a large number of catabolite-regulated genes. Thus, P-Ser-HPr is a corepressor in carbon catabolite repression (CCR), a mechanism that allows bacteria to coordinate and optimize the utilization of available carbon sources. P-Ser-HPr also plays a role in inducer exclusion, in which it probably interacts with several non-PTS permeases and inhibits their transport activity. This Streptococcus mutans serotype c (strain ATCC 700610 / UA159) protein is Phosphocarrier protein HPr (ptsH).